The chain runs to 63 residues: Large ribosomal subunit protein bL33m (63 aa).

Belongs to the bacterial ribosomal protein bL33 family.

The protein localises to the mitochondrion. The sequence is that of Large ribosomal subunit protein bL33m (mrpl33) from Dictyostelium discoideum (Social amoeba).